The following is a 354-amino-acid chain: UPF0421 protein BH2644 (354 aa).

The next 4 membrane-spanning stretches (helical) occupy residues 22-42 (AVCL…FAVI), 60-80 (LIRL…AYFF), 107-127 (TLVA…HLFA), and 133-153 (VAGT…ILPP).

Belongs to the UPF0421 family.

It localises to the cell membrane. This chain is UPF0421 protein BH2644, found in Halalkalibacterium halodurans (strain ATCC BAA-125 / DSM 18197 / FERM 7344 / JCM 9153 / C-125) (Bacillus halodurans).